The following is a 280-amino-acid chain: 4-diphosphocytidyl-2-C-methyl-D-erythritol kinase (280 aa).

The active site involves Lys9. ATP is bound at residue 92–102; sequence PMGGGLGGGSS. The active site involves Asp134.

This sequence belongs to the GHMP kinase family. IspE subfamily.

The enzyme catalyses 4-CDP-2-C-methyl-D-erythritol + ATP = 4-CDP-2-C-methyl-D-erythritol 2-phosphate + ADP + H(+). It participates in isoprenoid biosynthesis; isopentenyl diphosphate biosynthesis via DXP pathway; isopentenyl diphosphate from 1-deoxy-D-xylulose 5-phosphate: step 3/6. Functionally, catalyzes the phosphorylation of the position 2 hydroxy group of 4-diphosphocytidyl-2C-methyl-D-erythritol. The polypeptide is 4-diphosphocytidyl-2-C-methyl-D-erythritol kinase (Nitrosococcus oceani (strain ATCC 19707 / BCRC 17464 / JCM 30415 / NCIMB 11848 / C-107)).